The chain runs to 500 residues: MTIFDNYEVWFVIGSQHLYGPKTLRQVTQHAEHVVKALNTEAKLPCKLVLKPLGTSPDEITAICRDANYDDRCAGLVVWLHTFSPAKMWINGLSILNKPLLQFHTQFNAALPWDSIDMDFMNLNQTAHGGREFGFIGARMRQQHAVVTGHWQDKEAHTRISAWMRQAVSKQDIRQLKVCRFGDNMREVAVTDGDKVAAQIKFGFSVNTWAVGDLVQVVNSISDGDINALIDEYESSYTLTPATRIHGDKRQNVREAARIELGIKRFLEQGGFHAFTTTFEDLHGLKQLPGLAVQRLMQQGYGFAGEGDWKTAALLRIMKVMSTGLQGGTSFMEDYTYHFEKGNDLVLGSHMLEVCPSIAVEEKPLLDVQHLGIGGKEDPARLIFNTQTGSAIVASLIDLGDRYRLLVNCIDTVKTPHDLPKLPVANALWKAQPDLPTASEAWILAGGAHHTVFSHALDLNDMRQFAEMHDIEIAVIDNDTHLPGFKDALRWNDMYYSLKH.

Glu306, Glu333, His350, and His450 together coordinate Mn(2+).

This sequence belongs to the arabinose isomerase family. Homohexamer. It depends on Mn(2+) as a cofactor.

It catalyses the reaction beta-L-arabinopyranose = L-ribulose. It participates in carbohydrate degradation; L-arabinose degradation via L-ribulose; D-xylulose 5-phosphate from L-arabinose (bacterial route): step 1/3. Functionally, catalyzes the conversion of L-arabinose to L-ribulose. This chain is L-arabinose isomerase, found in Salmonella arizonae (strain ATCC BAA-731 / CDC346-86 / RSK2980).